The sequence spans 360 residues: Isopentenyl-diphosphate delta-isomerase (360 aa).

12–13 (RK) is a binding site for substrate. Residues Ser70, 71–73 (SMT), Ser101, and Asn130 each bind FMN. 101 to 103 (SMR) serves as a coordination point for substrate. Gln165 contacts substrate. Glu166 contacts Mg(2+). Residues Lys197, 288–290 (GIR), and 309–310 (AG) contribute to the FMN site.

The protein belongs to the IPP isomerase type 2 family. Homooctamer. Dimer of tetramers. FMN is required as a cofactor. It depends on NADPH as a cofactor. The cofactor is Mg(2+).

The protein localises to the cytoplasm. It catalyses the reaction isopentenyl diphosphate = dimethylallyl diphosphate. Functionally, involved in the biosynthesis of isoprenoids. Catalyzes the 1,3-allylic rearrangement of the homoallylic substrate isopentenyl (IPP) to its allylic isomer, dimethylallyl diphosphate (DMAPP). The chain is Isopentenyl-diphosphate delta-isomerase from Chlorobium limicola (strain DSM 245 / NBRC 103803 / 6330).